We begin with the raw amino-acid sequence, 752 residues long: Double zinc ribbon and ankyrin repeat-containing protein 1 (752 aa).

Phosphoserine is present on residues S160 and S182. A disordered region spans residues 164-187 (IPAYGGGSGSRPPTRQSQSPGFAH). Over residues 174 to 183 (RPPTRQSQSP) the composition is skewed to polar residues. DZANK-type zinc fingers lie at residues 211 to 270 (CAHC…CVVC) and 339 to 387 (CYRC…GSCG). ANK repeat units lie at residues 605–636 (ENRL…DPNC) and 640–669 (DNRP…DIDQ).

As to quaternary structure, interacts with NINL isoform 2. Associates with DYNC1H1 and multiple dynein intermediate and light chains as well as actin-binding proteins.

The protein resides in the cytoplasm. Its subcellular location is the cytoskeleton. The protein localises to the microtubule organizing center. It is found in the centrosome. It localises to the cilium basal body. In terms of biological role, involved in vesicle transport in photoreceptor cells. This Homo sapiens (Human) protein is Double zinc ribbon and ankyrin repeat-containing protein 1.